The primary structure comprises 1289 residues: uncharacterized protein (1289 aa).

The MHD1 domain occupies 615–733; it reads LDMYDVLKEL…DGMLSYSAQL (119 aa). Positions 745 to 774 are disordered; sequence DEPSYSLESSDTRSSLSLNNANVNHEKSRS. Residues 748–762 show a composition bias toward low complexity; that stretch reads SYSLESSDTRSSLSL. Residues 834-966 form the C2 domain; it reads AQYHSSHNLE…DDGFPIDFSL (133 aa). The MHD2 domain occupies 1044–1184; that stretch reads YDAILPLFDY…KSVSELKDEV (141 aa).

It localises to the cytoplasm. This is an uncharacterized protein from Saccharomyces cerevisiae (strain ATCC 204508 / S288c) (Baker's yeast).